We begin with the raw amino-acid sequence, 420 residues long: Vacuolar amino acid transporter 5 (420 aa).

Topologically, residues 1–19 (MSGYSPLSSGPADVHIGKA) are cytoplasmic. The helical transmembrane segment at 20–40 (GFFSSVINLANTILGAGILSL) threads the bilayer. The Vacuolar portion of the chain corresponds to 41-49 (PNAFTKTGL). The helical transmembrane segment at 50–70 (LFGCLTIVFSAFASFLGLYFV) threads the bilayer. Residues 71–96 (SQCAARLPRGKASFAAVAKHTFPSLA) are Cytoplasmic-facing. The chain crosses the membrane as a helical span at residues 97–117 (VVFDASIAVKCFGVAVSYLVI). Residues 118–141 (VGDLMPQIAPSLGLSSPMFLRRQT) are Vacuolar-facing. A helical membrane pass occupies residues 142-162 (WIVFALFVLTPLSFLKRLDSL). The Cytoplasmic portion of the chain corresponds to 163 to 166 (RHTS). Residues 167 to 187 (VISLIALCYLVFIVLYHFIIG) traverse the membrane as a helical segment. Residues 188 to 195 (DTVKGEIR) are Vacuolar-facing. The helical transmembrane segment at 196 to 216 (YFVPESGFGYLSVLPVFVFGF) threads the bilayer. The Cytoplasmic portion of the chain corresponds to 217–240 (TCHQNAFSVINEVRNFSQGFVNFT). The chain crosses the membrane as a helical span at residues 241–261 (MFTAIISSTLLYLLVAITGYL). Residues 262–278 (SFGSLASGNIIAMYDNT) lie on the Vacuolar side of the membrane. Residues 279-299 (SIWIIGGKLAIVVLVLFSYPL) form a helical membrane-spanning segment. Over 300–326 (QCHPCRNSVYQAIRRSYSAHDMSDGYH) the chain is Cytoplasmic. A helical membrane pass occupies residues 327–347 (AVITLCILLFTHSLALLLSSL). The Vacuolar portion of the chain corresponds to 348 to 349 (EM). A helical membrane pass occupies residues 350–370 (VLAFVGSTGSTFISFILPGSL). Topologically, residues 371–394 (YYFFSHKVASPGNSSPLQLRISRA) are cytoplasmic. A helical transmembrane segment spans residues 395–415 (FAAGLAIYGTVVMILCLNINI). Residues 416–420 (AKLSH) lie on the Vacuolar side of the membrane.

The protein belongs to the amino acid/polyamine transporter 2 family.

The protein localises to the vacuole membrane. Its function is as follows. Vacuolar amino acid transporter involved in the vacuolar uptake of histidine, glutamate, tyrosine, arginine, lysine, and serine. Required for sporulation. The protein is Vacuolar amino acid transporter 5 (avt5) of Schizosaccharomyces pombe (strain 972 / ATCC 24843) (Fission yeast).